The following is a 481-amino-acid chain: 3-isopropylmalate dehydratase large subunit (481 aa).

[4Fe-4S] cluster is bound by residues Cys-363, Cys-423, and Cys-426. The segment at 432–459 is disordered; that stretch reads DQLKPGERSASTSNRNFEGRQGPGGRTH.

This sequence belongs to the aconitase/IPM isomerase family. LeuC type 1 subfamily. In terms of assembly, heterodimer of LeuC and LeuD. The cofactor is [4Fe-4S] cluster.

The catalysed reaction is (2R,3S)-3-isopropylmalate = (2S)-2-isopropylmalate. It functions in the pathway amino-acid biosynthesis; L-leucine biosynthesis; L-leucine from 3-methyl-2-oxobutanoate: step 2/4. In terms of biological role, catalyzes the isomerization between 2-isopropylmalate and 3-isopropylmalate, via the formation of 2-isopropylmaleate. This chain is 3-isopropylmalate dehydratase large subunit, found in Corynebacterium glutamicum (strain R).